The primary structure comprises 255 residues: Ribonuclease HII (255 aa).

An RNase H type-2 domain is found at 72–255; the sequence is NYIAGVDEAG…RLSFVKNFVE (184 aa). The a divalent metal cation site is built by D78, E79, and D170.

Belongs to the RNase HII family. It depends on Mn(2+) as a cofactor. Mg(2+) serves as cofactor.

The protein localises to the cytoplasm. The catalysed reaction is Endonucleolytic cleavage to 5'-phosphomonoester.. Its function is as follows. Endonuclease that specifically degrades the RNA of RNA-DNA hybrids. The polypeptide is Ribonuclease HII (Ruminiclostridium cellulolyticum (strain ATCC 35319 / DSM 5812 / JCM 6584 / H10) (Clostridium cellulolyticum)).